The following is a 207-amino-acid chain: LexA repressor (207 aa).

The segment at residues 29–49 (VREICSAVDLSSTSTVHGHLA) is a DNA-binding region (H-T-H motif). Active-site for autocatalytic cleavage activity residues include S128 and K166.

Belongs to the peptidase S24 family. Homodimer.

The catalysed reaction is Hydrolysis of Ala-|-Gly bond in repressor LexA.. Functionally, represses a number of genes involved in the response to DNA damage (SOS response), including recA and lexA. In the presence of single-stranded DNA, RecA interacts with LexA causing an autocatalytic cleavage which disrupts the DNA-binding part of LexA, leading to derepression of the SOS regulon and eventually DNA repair. The polypeptide is LexA repressor (Lactobacillus johnsonii (strain CNCM I-12250 / La1 / NCC 533)).